Here is a 381-residue protein sequence, read N- to C-terminus: tRNA (guanine(6)-N2)-methyltransferase (381 aa).

One can recognise a THUMP domain in the interval 43–157 (KLIPKINYLS…FDELIVGIDT (115 aa)). Residues 173–177 (HPAHL), 204–206 (SGT), Asp261, 289–290 (DA), and Asn306 contribute to the S-adenosyl-L-methionine site.

This sequence belongs to the methyltransferase superfamily.

The protein localises to the cytoplasm. The catalysed reaction is guanosine(6) in tRNA + S-adenosyl-L-methionine = N(2)-methylguanosine(6) in tRNA + S-adenosyl-L-homocysteine + H(+). Its function is as follows. S-adenosyl-L-methionine-dependent methyltransferase that catalyzes the methylation of the guanosine nucleotide at position 6 (m2G6) in tRNA(Cys). In Methanocaldococcus jannaschii (strain ATCC 43067 / DSM 2661 / JAL-1 / JCM 10045 / NBRC 100440) (Methanococcus jannaschii), this protein is tRNA (guanine(6)-N2)-methyltransferase.